A 437-amino-acid chain; its full sequence is Putative ankyrin repeat protein FPV014 (437 aa).

ANK repeat units lie at residues 32 to 61 (YGCS…NPDL), 65 to 94 (STPT…DPDN), 99 to 128 (ESRT…DAED), 131 to 160 (RFNC…RINS), 164 to 195 (GSVY…DVED), 197 to 226 (LSFS…SVDV), and 230 to 259 (CGRT…DTSV).

The chain is Putative ankyrin repeat protein FPV014 from Fowlpox virus (strain NVSL) (FPV).